The sequence spans 733 residues: Phosphoribosylformylglycinamidine synthase subunit PurL (733 aa).

Residue H44 is part of the active site. ATP is bound by residues Y47 and K86. Residue E88 coordinates Mg(2+). Substrate contacts are provided by residues 89–92 and R111; that span reads SHNH. The Proton acceptor role is filled by H90. D112 contacts Mg(2+). Q240 lines the substrate pocket. D268 is a binding site for Mg(2+). 312–314 lines the substrate pocket; that stretch reads ESQ. ATP contacts are provided by D496 and G533. N534 is a binding site for Mg(2+). S536 lines the substrate pocket.

It belongs to the FGAMS family. Monomer. Part of the FGAM synthase complex composed of 1 PurL, 1 PurQ and 2 PurS subunits.

The protein resides in the cytoplasm. The enzyme catalyses N(2)-formyl-N(1)-(5-phospho-beta-D-ribosyl)glycinamide + L-glutamine + ATP + H2O = 2-formamido-N(1)-(5-O-phospho-beta-D-ribosyl)acetamidine + L-glutamate + ADP + phosphate + H(+). It participates in purine metabolism; IMP biosynthesis via de novo pathway; 5-amino-1-(5-phospho-D-ribosyl)imidazole from N(2)-formyl-N(1)-(5-phospho-D-ribosyl)glycinamide: step 1/2. Part of the phosphoribosylformylglycinamidine synthase complex involved in the purines biosynthetic pathway. Catalyzes the ATP-dependent conversion of formylglycinamide ribonucleotide (FGAR) and glutamine to yield formylglycinamidine ribonucleotide (FGAM) and glutamate. The FGAM synthase complex is composed of three subunits. PurQ produces an ammonia molecule by converting glutamine to glutamate. PurL transfers the ammonia molecule to FGAR to form FGAM in an ATP-dependent manner. PurS interacts with PurQ and PurL and is thought to assist in the transfer of the ammonia molecule from PurQ to PurL. This is Phosphoribosylformylglycinamidine synthase subunit PurL from Wolinella succinogenes (strain ATCC 29543 / DSM 1740 / CCUG 13145 / JCM 31913 / LMG 7466 / NCTC 11488 / FDC 602W) (Vibrio succinogenes).